The sequence spans 331 residues: Probable allantoicase (331 aa).

Belongs to the allantoicase family.

The catalysed reaction is allantoate + H2O = (S)-ureidoglycolate + urea. It functions in the pathway nitrogen metabolism; (S)-allantoin degradation; (S)-ureidoglycolate from allantoate (aminidohydrolase route): step 1/1. This chain is Probable allantoicase, found in Pseudomonas fluorescens (strain Pf0-1).